The following is a 425-amino-acid chain: CAAX prenyl protease 1 homolog (425 aa).

A run of 5 helical transmembrane segments spans residues 3–23 (LPYLEAVLCFMILMYIFETYL), 62–80 (FHFIHEAVTILMDTTILYY), 109–129 (LAFLAGVMIWSQITDLPFSLY), 155–175 (GILLSILLGPPIVAAIIIIVQ), and 188–208 (FMFALSLVMMTIYPIVIAPLF). His284 contributes to the Zn(2+) binding site. Glu285 is an active-site residue. His288 lines the Zn(2+) pocket. Helical transmembrane passes span 295–315 (VYSFVAVQLLMFLQFGGYTLV) and 332–352 (VIIGLIIFQHTIIPVQHLLSF). Glu362 contributes to the Zn(2+) binding site. Asp366 acts as the Proton donor in catalysis.

The protein belongs to the peptidase M48A family. It depends on Zn(2+) as a cofactor.

It localises to the endoplasmic reticulum membrane. The enzyme catalyses Hydrolyzes the peptide bond -P2-(S-farnesyl or geranylgeranyl)C-P1'-P2'-P3'-COOH where P1' and P2' are amino acids with aliphatic side chains and P3' is any C-terminal residue.. Functionally, proteolytically removes the C-terminal three residues of farnesylated proteins. This Oryza sativa subsp. japonica (Rice) protein is CAAX prenyl protease 1 homolog (FACE1).